The chain runs to 357 residues: DNA replication and repair protein RecF (357 aa).

ATP is bound at residue 30–37 (GANGSGKT).

This sequence belongs to the RecF family.

The protein localises to the cytoplasm. Its function is as follows. The RecF protein is involved in DNA metabolism; it is required for DNA replication and normal SOS inducibility. RecF binds preferentially to single-stranded, linear DNA. It also seems to bind ATP. This Shigella flexneri serotype 5b (strain 8401) protein is DNA replication and repair protein RecF.